The sequence spans 638 residues: 1,4-alpha-glucan branching enzyme GlgB (638 aa).

Catalysis depends on D320, which acts as the Nucleophile. E373 acts as the Proton donor in catalysis.

The protein belongs to the glycosyl hydrolase 13 family. GlgB subfamily. In terms of assembly, monomer.

It carries out the reaction Transfers a segment of a (1-&gt;4)-alpha-D-glucan chain to a primary hydroxy group in a similar glucan chain.. The protein operates within glycan biosynthesis; glycogen biosynthesis. Its function is as follows. Catalyzes the formation of the alpha-1,6-glucosidic linkages in glycogen by scission of a 1,4-alpha-linked oligosaccharide from growing alpha-1,4-glucan chains and the subsequent attachment of the oligosaccharide to the alpha-1,6 position. The polypeptide is 1,4-alpha-glucan branching enzyme GlgB (Oleidesulfovibrio alaskensis (strain ATCC BAA-1058 / DSM 17464 / G20) (Desulfovibrio alaskensis)).